The following is a 199-amino-acid chain: CASP-like protein 1D2 (199 aa).

Residues 1-27 (MASTENPDPETGKSEPIPASATPPPSS) form a disordered region. An N-acetylalanine modification is found at Ala2. Over 2 to 36 (ASTENPDPETGKSEPIPASATPPPSSAASFLDCRK) the chain is Cytoplasmic. A helical membrane pass occupies residues 37 to 57 (IDIITRVLLFSATLTALIVMV). Topologically, residues 58–85 (TSDQTEMTQLPGVSSPAPVSAEFNDSPA) are extracellular. Residues 86-106 (FIYFVVALVVASFYALISTLV) form a helical membrane-spanning segment. At 107–129 (SISLLLKPEFTAQFSIYLASLDM) the chain is on the cytoplasmic side. The chain crosses the membrane as a helical span at residues 130–150 (VMLGILASATGTAGGVAYIAL). Residues 151–171 (KGNEEVGWNKICNVYDKFCRY) are Extracellular-facing. The chain crosses the membrane as a helical span at residues 172–192 (IATSLALSLFASLLLLVLSIW). Residues 193–199 (SALSKRT) lie on the Cytoplasmic side of the membrane.

It belongs to the Casparian strip membrane proteins (CASP) family. In terms of assembly, homodimer and heterodimers. As to expression, expressed in the root endodermis and flowers.

It is found in the cell membrane. The chain is CASP-like protein 1D2 from Arabidopsis thaliana (Mouse-ear cress).